The chain runs to 94 residues: MLKPLGDRIIIEQIQSEEKTASGIVLPDSAKEKPQEGKVVAVGTGRVTDNGEKVALEVKEGDSIIFSKYAGTEVKYEGTEYLILRESDVLAIIG.

The protein belongs to the GroES chaperonin family. Heptamer of 7 subunits arranged in a ring. Interacts with the chaperonin GroEL.

The protein resides in the cytoplasm. Together with the chaperonin GroEL, plays an essential role in assisting protein folding. The GroEL-GroES system forms a nano-cage that allows encapsulation of the non-native substrate proteins and provides a physical environment optimized to promote and accelerate protein folding. GroES binds to the apical surface of the GroEL ring, thereby capping the opening of the GroEL channel. This Shouchella clausii (strain KSM-K16) (Alkalihalobacillus clausii) protein is Co-chaperonin GroES.